The sequence spans 914 residues: Thyroid peroxidase (914 aa).

The signal sequence occupies residues 1–31 (MRTLGAMAVMLVVMGTAIFLPFLLRSRDILG). Over 32–834 (GKTMTSHVIS…TCIDSGRLPR (803 aa)) the chain is Extracellular. N-linked (GlcNAc...) asparagine glycosylation occurs at Asn-123. An intrachain disulfide couples Cys-136 to Cys-152. Asp-232 provides a ligand contact to heme b. The active-site Proton acceptor is His-233. Asp-234 lines the Ca(2+) pocket. Intrachain disulfides connect Cys-253-Cys-263 and Cys-257-Cys-278. N-linked (GlcNAc...) asparagine glycosylation is found at Asn-271 and Asn-299. Ca(2+) contacts are provided by Thr-313, Phe-315, Asp-317, and Ser-319. Asn-334 is a glycosylation site (N-linked (GlcNAc...) asparagine). Glu-387 and His-482 together coordinate heme b. 7 disulfides stabilise this stretch: Cys-586–Cys-643, Cys-684–Cys-709, Cys-730–Cys-770, Cys-756–Cys-782, Cys-788–Cys-802, Cys-796–Cys-811, and Cys-813–Cys-826. N-linked (GlcNAc...) asparagine glycosylation is present at Asn-603. The Sushi domain maps to 728-783 (DKCVFPEKVDNGNFVHCEESGKLVLVYSCFHGYKLQGQEQVTCTQNGWDSEPPVCK). The 44-residue stretch at 784–827 (DVNECADLTHPPCHSSAKCKNTKGSFQCVCTDPYMLGEDEKTCI) folds into the EGF-like; calcium-binding domain. The helical transmembrane segment at 835–859 (ASWVSIALGALLIGGLASLSWTVIC) threads the bilayer. The Cytoplasmic segment spans residues 860 to 914 (RWTHADKKSTLLITERVTMESGFRKSQESGISPQKAEVQDAEQEPAYGSRVLLCE). Positions 882-907 (FRKSQESGISPQKAEVQDAEQEPAYG) are disordered.

The protein belongs to the peroxidase family. XPO subfamily. Interacts with DUOX1, DUOX2 and CYBA. It depends on Ca(2+) as a cofactor. The cofactor is heme b. Heme is covalently bound through a H(2)O(2)-dependent autocatalytic process. Heme insertion is important for the delivery of protein at the cell surface. In terms of processing, cleaved in its N-terminal part.

The protein resides in the membrane. The catalysed reaction is 2 iodide + H2O2 + 2 H(+) = diiodine + 2 H2O. The enzyme catalyses [thyroglobulin]-L-tyrosine + iodide + H2O2 + H(+) = [thyroglobulin]-3-iodo-L-tyrosine + 2 H2O. It catalyses the reaction [thyroglobulin]-3-iodo-L-tyrosine + iodide + H2O2 + H(+) = [thyroglobulin]-3,5-diiodo-L-tyrosine + 2 H2O. It carries out the reaction 2 [thyroglobulin]-3,5-diiodo-L-tyrosine + H2O2 = [thyroglobulin]-L-thyroxine + [thyroglobulin]-dehydroalanine + 2 H2O. The catalysed reaction is [thyroglobulin]-3-iodo-L-tyrosine + [thyroglobulin]-3,5-diiodo-L-tyrosine + H2O2 = [thyroglobulin]-3,3',5-triiodo-L-thyronine + [thyroglobulin]-dehydroalanine + 2 H2O. It functions in the pathway hormone biosynthesis; thyroid hormone biosynthesis. Functionally, iodination and coupling of the hormonogenic tyrosines in thyroglobulin to yield the thyroid hormones T(3) and T(4). The protein is Thyroid peroxidase (Tpo) of Rattus norvegicus (Rat).